The chain runs to 826 residues: Ferric-pyoverdine M114 receptor PbuA (826 aa).

The N-terminal stretch at 1–44 is a signal peptide; that stretch reads MSASRFMLRPLTRALLMHGATRTRLAGTGLGLALTLTAAPYVQA. The short motif at 110–119 is the TonB box element; the sequence is DGNTVTVLGP. A TBDR plug domain is found at 160 to 271; it reads SLKETPQSVT…TAGGVNFVRK (112 aa). A TBDR beta-barrel domain is found at 276–826; sequence TAHTQLSLSA…NFVMSVKADF (551 aa). Positions 809 to 826 match the TonB C-terminal box motif; sequence GNFYGDPRNFVMSVKADF.

This sequence belongs to the TonB-dependent receptor family.

The protein localises to the cell outer membrane. Its function is as follows. Specific receptor for the siderophore ferric pyoverdine (pseudobactin) M114. This chain is Ferric-pyoverdine M114 receptor PbuA (pbuA), found in Pseudomonas sp. (strain M114).